A 293-amino-acid chain; its full sequence is Small ribosomal subunit biogenesis GTPase RsgA (293 aa).

Residues 63–223 (QNELVRPPIA…VADTPGFSAL (161 aa)) form the CP-type G domain. GTP-binding positions include 112–115 (SKID) and 166–174 (GQSGVGKSS). Positions 247, 252, 254, and 260 each coordinate Zn(2+).

It belongs to the TRAFAC class YlqF/YawG GTPase family. RsgA subfamily. As to quaternary structure, monomer. Associates with 30S ribosomal subunit, binds 16S rRNA. It depends on Zn(2+) as a cofactor.

Its subcellular location is the cytoplasm. In terms of biological role, one of several proteins that assist in the late maturation steps of the functional core of the 30S ribosomal subunit. Helps release RbfA from mature subunits. May play a role in the assembly of ribosomal proteins into the subunit. Circularly permuted GTPase that catalyzes slow GTP hydrolysis, GTPase activity is stimulated by the 30S ribosomal subunit. This Geobacillus kaustophilus (strain HTA426) protein is Small ribosomal subunit biogenesis GTPase RsgA.